The following is a 333-amino-acid chain: Chitinase-like protein 2 (333 aa).

The first 27 residues, 1-27 (MVSKPLFSLLLLTVALVVFQTGTLVNA), serve as a signal peptide directing secretion. Cysteines 50 and 56 form a disulfide. N65 carries N-linked (GlcNAc...) asparagine glycosylation. Cysteines 165 and 175 form a disulfide. N216 and N252 each carry an N-linked (GlcNAc...) asparagine glycan. A disulfide bridge connects residues C275 and C313. The interval 307–333 (PHEKLSCADQEPFSSSSSAPPSSGSSS) is disordered. The span at 320-333 (SSSSSAPPSSGSSS) shows a compositional bias: low complexity.

The protein belongs to the glycosyl hydrolase 19 family. Mostly expressed in stems, especially in xylem and interfascicular fibers.

It is found in the secreted. Its function is as follows. No chitinase activity. Required for proper cell wall biosynthesis in etiolated seedlings. Prevents lignin accumulation in hypocotyls. This chain is Chitinase-like protein 2 (CTL2), found in Arabidopsis thaliana (Mouse-ear cress).